Consider the following 294-residue polypeptide: Probable endonuclease 4 (294 aa).

Zn(2+)-binding residues include histidine 71, histidine 111, glutamate 148, aspartate 182, histidine 185, histidine 217, aspartate 230, histidine 232, and glutamate 262.

This sequence belongs to the AP endonuclease 2 family. Zn(2+) is required as a cofactor.

The enzyme catalyses Endonucleolytic cleavage to 5'-phosphooligonucleotide end-products.. Its function is as follows. Endonuclease IV plays a role in DNA repair. It cleaves phosphodiester bonds at apurinic or apyrimidinic (AP) sites, generating a 3'-hydroxyl group and a 5'-terminal sugar phosphate. In Acholeplasma laidlawii (strain PG-8A), this protein is Probable endonuclease 4.